Consider the following 716-residue polypeptide: MIYQSPTIQVELLEDNIAKLCFNAPGSVNKFDRETLASLDAALDSIKQDSNIKALVLTSSKDTFIVGADITEFLGLFAQDDAVLLSWVEQANAVFNKLEDLPFPTASAIKGFALGGGCETILATDFRVADTTAKIGLPETKLGIIPGFGGTVRLPRVIGADNALEWITTGKDQRAEDALKVGAVDAVVAPQALEAAAIQMLKDAVAEKLDWQARRNRKLSALTLPKLEAMMSFTTAKGMVFAVAGKHYPAPMAAVSVIEQASTKGRAEALQIEHQAFIKLAKTDVAKALIGIFLNDQFVKGKAKKAGKLAKEVNNAAVLGAGIMGGGIAYQSASKGTPIVMKDIAQPALDLGLNEAAKLLSAQVARGRSTPEKMAKVLNNITPSLDYAAIKHSDVVVEAVVEHPKIKAQVLAEVEGYVSEDAIIASNTSTISINLLAKSMKKPERFCGMHFFNPVHKMPLVEVIRGEHSSEETIASVVAYASKMGKTPIVVNDCPGFFVNRVLFPYFAGFNGLLAEGGDFAAIDKVMEKQFGWPMGPAYLLDVVGLDTGHHAQAVMAEGFPDRMGKSGTDAIDVMFENKRLGQKNGKGFYVYSVDSRGKPKKDVDPTSYGLLKDAFGELKAFEADDIIARTMIPMIIETVRCLEEGIVASPAEADMGLVYGLGFPPFRGGVFRYLDTMGVANFVALADKYAHLGGLYQVTDAMRTLAANNGSYYQA.

Positions 1-189 are enoyl-CoA hydratase/isomerase; sequence MIYQSPTIQV…KVGAVDAVVA (189 aa). Position 296 (Asp-296) interacts with substrate. A 3-hydroxyacyl-CoA dehydrogenase region spans residues 311–716; that stretch reads KEVNNAAVLG…AANNGSYYQA (406 aa). NAD(+)-binding positions include Met-324, Asp-343, 400–402, Lys-407, and Ser-429; that span reads VVE. His-450 functions as the For 3-hydroxyacyl-CoA dehydrogenase activity in the catalytic mechanism. Asn-453 is a binding site for NAD(+). Substrate contacts are provided by Asn-500 and Tyr-660.

The protein in the N-terminal section; belongs to the enoyl-CoA hydratase/isomerase family. In the C-terminal section; belongs to the 3-hydroxyacyl-CoA dehydrogenase family. Heterotetramer of two alpha chains (FadB) and two beta chains (FadA).

It carries out the reaction a (3S)-3-hydroxyacyl-CoA + NAD(+) = a 3-oxoacyl-CoA + NADH + H(+). It catalyses the reaction a (3S)-3-hydroxyacyl-CoA = a (2E)-enoyl-CoA + H2O. The catalysed reaction is a 4-saturated-(3S)-3-hydroxyacyl-CoA = a (3E)-enoyl-CoA + H2O. The enzyme catalyses (3S)-3-hydroxybutanoyl-CoA = (3R)-3-hydroxybutanoyl-CoA. It carries out the reaction a (3Z)-enoyl-CoA = a 4-saturated (2E)-enoyl-CoA. It catalyses the reaction a (3E)-enoyl-CoA = a 4-saturated (2E)-enoyl-CoA. It functions in the pathway lipid metabolism; fatty acid beta-oxidation. Functionally, involved in the aerobic and anaerobic degradation of long-chain fatty acids via beta-oxidation cycle. Catalyzes the formation of 3-oxoacyl-CoA from enoyl-CoA via L-3-hydroxyacyl-CoA. It can also use D-3-hydroxyacyl-CoA and cis-3-enoyl-CoA as substrate. This is Fatty acid oxidation complex subunit alpha from Shewanella baltica (strain OS195).